We begin with the raw amino-acid sequence, 2298 residues long: Protein Ycf2 (2298 aa).

G1638–S1645 is an ATP binding site.

The protein belongs to the Ycf2 family.

The protein localises to the plastid. The protein resides in the chloroplast stroma. In terms of biological role, probable ATPase of unknown function. Its presence in a non-photosynthetic plant (Epifagus virginiana) and experiments in tobacco indicate that it has an essential function which is probably not related to photosynthesis. The chain is Protein Ycf2 from Gossypium barbadense (Sea Island cotton).